The following is a 238-amino-acid chain: Citrate-binding protein (238 aa).

The first 31 residues, 1 to 31 (MKMKRSPYCFCCSFALLLLVSFLKDRHFCSA), serve as a signal peptide directing secretion. A propeptide spans 225-238 (LEGCNNNHGTWLVQ) (removed in mature form).

Its subcellular location is the vacuole. Functionally, may be a subunit of a vacuolar malate and citrate transporter. This is Citrate-binding protein (CBP) from Hevea brasiliensis (Para rubber tree).